Here is an 87-residue protein sequence, read N- to C-terminus: UPF0250 protein PC1_1177 (87 aa).

The protein belongs to the UPF0250 family.

This is UPF0250 protein PC1_1177 from Pectobacterium carotovorum subsp. carotovorum (strain PC1).